A 263-amino-acid chain; its full sequence is Zinc import ATP-binding protein ZnuC (263 aa).

The ABC transporter domain maps to 11 to 226; that stretch reads VELKNINVVF…PTFIHFFGDQ (216 aa). 43–50 provides a ligand contact to ATP; the sequence is GPNGGGKS.

Belongs to the ABC transporter superfamily. Zinc importer (TC 3.A.1.15.5) family. As to quaternary structure, the complex is composed of two ATP-binding proteins (ZnuC), two transmembrane proteins (ZnuB) and a solute-binding protein (ZnuA).

The protein localises to the cell inner membrane. The catalysed reaction is Zn(2+)(out) + ATP(in) + H2O(in) = Zn(2+)(in) + ADP(in) + phosphate(in) + H(+)(in). In terms of biological role, part of the ABC transporter complex ZnuABC involved in zinc import. Responsible for energy coupling to the transport system. This chain is Zinc import ATP-binding protein ZnuC, found in Pasteurella multocida (strain Pm70).